Consider the following 457-residue polypeptide: UDP-glycosyltransferase 708C2 (457 aa).

Residue H32 is the Proton acceptor of the active site. H32 contributes to the an anthocyanidin binding site. The active-site Charge relay is the D129. A UDP-alpha-D-glucose-binding site is contributed by T150. The tract at residues 279–280 (NR) is UDP. UDP-alpha-D-glucose is bound by residues V341, Q343, H358, W361, N362, S363, and E366. Residue G381 participates in an anthocyanidin binding. UDP-alpha-D-glucose-binding residues include D382 and Q383.

It belongs to the UDP-glycosyltransferase family. In terms of tissue distribution, expressed in cotyledons. Not detected in flowers, leaves, roots and hypocotyls.

The enzyme catalyses a 3'-hydro-2'-hydroxy-beta-oxodihydrochalcone + UDP-alpha-D-glucose = a 3'-(beta-D-glucopyranosyl)-2'-hydroxy-beta-oxodihydrochalcone + UDP + H(+). Its function is as follows. UDP-glucose-dependent glucosyltransferase catalyzing the c-glucosylation of 2-hydroxyflavanones (2-hydroxynaringenin, 2-hydroxyeriodictyol and 2-hydroxypinocembrin) and phloretin. No activity with flavanones, flavones or flavonols. The chain is UDP-glycosyltransferase 708C2 from Fagopyrum esculentum (Common buckwheat).